We begin with the raw amino-acid sequence, 448 residues long: Microtubule-associated protein tau (448 aa).

The segment covering M1–Q16 has biased composition (basic and acidic residues). The disordered stretch occupies residues M1–K264. At A2 the chain carries N-acetylalanine. Y19 carries the post-translational modification Phosphotyrosine. K33 participates in a covalent cross-link: Glycyl lysine isopeptide (Lys-Gly) (interchain with G-Cter in ubiquitin). Phosphoserine occurs at positions 35 and 50. Polar residues predominate over residues S50–T60. Phosphothreonine is present on residues T58 and T60. Low complexity predominate over residues E71–G89. T100 carries the phosphothreonine modification. Over residues K119–D135 the composition is skewed to basic and acidic residues. T144 carries the phosphothreonine modification. R146 carries the omega-N-methylarginine modification. K154 bears the N6,N6-dimethyllysine; alternate mark. The residue at position 154 (K154) is an N6-acetyllysine; alternate. Residues T160, T166, T167, and T172 each carry the phosphothreonine modification. Over residues P163–T176 the composition is skewed to low complexity. Residues K189–D200 show a composition bias toward basic and acidic residues. Residues S198 and S202 each carry the phosphoserine modification. The segment covering R201–S221 has biased composition (low complexity). Y204 is modified (phosphotyrosine). Phosphoserine is present on residues S205, S206, and S209. 2 positions are modified to phosphothreonine: T212 and T219. Phosphoserine is present on S221. T224 bears the Phosphothreonine mark. At K232 the chain carries N6-acetyllysine. The residue at position 238 (T238) is a Phosphothreonine. Phosphoserine occurs at positions 242 and 244. Tau/MAP repeat units follow at residues Q251–K281, V282–S312, V313–Q343, and V344–N375. A Glycyl lysine isopeptide (Lys-Gly) (interchain with G-Cter in ubiquitin) cross-link involves residue K261. N6-acetyllysine; alternate is present on K266. K266 is subject to N6-methyllysine; alternate. K266 participates in a covalent cross-link: Glycyl lysine isopeptide (Lys-Gly) (interchain with G-Cter in ubiquitin); alternate. The residue at position 269 (S269) is a Phosphoserine. Residue K274 forms a Glycyl lysine isopeptide (Lys-Gly) (interchain with G-Cter in ubiquitin) linkage. At K288 the chain carries N6-acetyllysine; alternate. K288 is covalently cross-linked (Glycyl lysine isopeptide (Lys-Gly) (interchain with G-Cter in ubiquitin); alternate). 2 positions are modified to phosphoserine: S292 and S296. K297 bears the N6-acetyllysine mark. The cysteines at positions 298 and 329 are disulfide-linked. Position 300 is a phosphoserine (S300). Position 305 is an N6-acetyllysine; alternate (K305). K305 is covalently cross-linked (Glycyl lysine isopeptide (Lys-Gly) (interchain with G-Cter in ubiquitin); alternate). S312 carries the post-translational modification Phosphoserine. K318 carries the post-translational modification N6,N6-dimethyllysine; alternate. An N6-acetyllysine; alternate mark is found at K318, K324, and K328. Residues K318, K324, and K328 each participate in a glycyl lysine isopeptide (Lys-Gly) (interchain with G-Cter in ubiquitin); alternate cross-link. Phosphoserine is present on S331. 3 positions are modified to N6-acetyllysine; alternate: K338, K350, and K354. Residues K338, K350, and K354 each participate in a glycyl lysine isopeptide (Lys-Gly) (interchain with G-Cter in ubiquitin); alternate cross-link. Position 356 is an omega-N-methylarginine (R356). S359 is modified (phosphoserine). A Glycyl lysine isopeptide (Lys-Gly) (interchain with G-Cter in ubiquitin) cross-link involves residue K360. S363 carries the post-translational modification Phosphoserine. Position 376 is an N6-acetyllysine; alternate (K376). Residue K376 forms a Glycyl lysine isopeptide (Lys-Gly) (interchain with G-Cter in ubiquitin); alternate linkage. K382 is covalently cross-linked (Glycyl lysine isopeptide (Lys-Gly) (interchain with G-Cter in ubiquitin)). An N6-acetyllysine; alternate modification is found at K392. A Glycyl lysine isopeptide (Lys-Gly) (interchain with G-Cter in ubiquitin); alternate cross-link involves residue K392. Position 401 is a phosphotyrosine (Y401). Phosphoserine occurs at positions 403 and 407. The disordered stretch occupies residues V405–I424. Positions G408–S423 are enriched in polar residues. T410 carries the phosphothreonine modification. Residues S411, S416, S423, and S429 each carry the phosphoserine modification. The residue at position 434 (T434) is a Phosphothreonine.

In terms of assembly, interacts with MARK1, MARK2, MARK3 and MARK4. Interacts with SQSTM1 when polyubiquitinated. Interacts with PSMC2 through SQSTM1. Interacts with FKBP4. Binds to CSNK1D. Interacts with SGK1. Interacts with PIN1. Interacts with LRRK2. Interacts with LRP1, leading to endocytosis; this interaction is reduced in the presence of LRPAP1/RAP. Polyubiquitinated. Requires functional TRAF6 and may provoke SQSTM1-dependent degradation by the proteasome. In terms of processing, phosphorylation at various serine and threonine residues in S-P or T-P motifs by proline-directed protein kinases (PDPK1, CDK1, CDK5, GSK3, MAPK) (a few sites per protein in interphase, more in mitosis), and at serine residues in K-X-G-S motifs by MAP/microtubule affinity-regulating kinase (MARK1, MARK2, MARK3, MARK4), causing detachment from microtubules, and their disassembly. Phosphorylation at Ser-269 by BRSK1 and BRSK2 in neurons affects ability to bind microtubules and plays a role in neuron polarization. Phosphorylated by PHK. Dephosphorylation at several serine and threonine residues by the serine/threonine phosphatase PPP5C. Post-translationally, O-glycosylated; contains at least 4 GlcNAc. Site-specific or stoichiometric changes in glycosylation may modulate tau function and also play a role in PHF's formation. As to expression, expressed in neurons.

It is found in the cytoplasm. It localises to the cytosol. The protein resides in the cell membrane. The protein localises to the cytoskeleton. Its subcellular location is the cell projection. It is found in the axon. It localises to the dendrite. The protein resides in the secreted. Functionally, promotes microtubule assembly and stability, and might be involved in the establishment and maintenance of neuronal polarity. The C-terminus binds axonal microtubules while the N-terminus binds neural plasma membrane components, suggesting that tau functions as a linker protein between both. Axonal polarity is predetermined by tau localization (in the neuronal cell) in the domain of the cell body defined by the centrosome. The short isoforms allow plasticity of the cytoskeleton whereas the longer isoforms may preferentially play a role in its stabilization. This is Microtubule-associated protein tau (MAPT) from Bos taurus (Bovine).